Consider the following 306-residue polypeptide: Porphobilinogen deaminase (306 aa).

Cysteine 239 carries the post-translational modification S-(dipyrrolylmethanemethyl)cysteine.

This sequence belongs to the HMBS family. Monomer. It depends on dipyrromethane as a cofactor.

It carries out the reaction 4 porphobilinogen + H2O = hydroxymethylbilane + 4 NH4(+). Its pathway is porphyrin-containing compound metabolism; protoporphyrin-IX biosynthesis; coproporphyrinogen-III from 5-aminolevulinate: step 2/4. Tetrapolymerization of the monopyrrole PBG into the hydroxymethylbilane pre-uroporphyrinogen in several discrete steps. The sequence is that of Porphobilinogen deaminase from Helicobacter acinonychis (strain Sheeba).